The primary structure comprises 159 residues: uncharacterized protein (159 aa).

An N-acetyltransferase domain is found at methionine 1 to proline 139.

This is an uncharacterized protein from Bacillus subtilis (strain 168).